Reading from the N-terminus, the 240-residue chain is tRNA (guanine-N(1)-)-methyltransferase (240 aa).

S-adenosyl-L-methionine is bound by residues G111 and 130–135 (IGDYVI).

Belongs to the RNA methyltransferase TrmD family. Homodimer.

It localises to the cytoplasm. The enzyme catalyses guanosine(37) in tRNA + S-adenosyl-L-methionine = N(1)-methylguanosine(37) in tRNA + S-adenosyl-L-homocysteine + H(+). In terms of biological role, specifically methylates guanosine-37 in various tRNAs. The chain is tRNA (guanine-N(1)-)-methyltransferase from Mycoplasma mycoides subsp. mycoides SC (strain CCUG 32753 / NCTC 10114 / PG1).